The following is a 186-amino-acid chain: C-type lectin 37Da (186 aa).

An N-terminal signal peptide occupies residues 1–20 (MLKTLVQLFLVVAGFAPGFG). N-linked (GlcNAc...) asparagine glycans are attached at residues N35 and N47. In terms of domain architecture, C-type lectin spans 46-169 (INESYYVFGQ…CHNHASSLFK (124 aa)). A disulfide bridge links C140 with C160.

Its subcellular location is the secreted. Galactose-specific lectin that displays calcium-dependent activity. Binds to the surface of hemocytes and enhances hemocyte encapsulation and melanization. This is likely by interacting with carbohydrates on the surface of the hemocytes. Also displays agglutination activity against the Gram-negative bacterium E.coli. This Drosophila melanogaster (Fruit fly) protein is C-type lectin 37Da.